Consider the following 817-residue polypeptide: Putative ATP-dependent RNA helicase R350 (817 aa).

A disordered region spans residues 1 to 29 (MNRRNRSNDLNPEPSIENPNNQIAEEFPG). A compositionally biased stretch (polar residues) spans 17 to 29 (ENPNNQIAEEFPG). A Helicase ATP-binding domain is found at 93–271 (LNPQGPYTSI…ALMFNLLRPG (179 aa)). Residue 106-113 (HGLGSGKT) coordinates ATP. The DEAH box signature appears at 206–209 (DEAH). The Helicase C-terminal domain maps to 495 to 661 (LAIAFMTYIS…STDEYVEDQA (167 aa)).

The protein belongs to the DEAD box helicase family. DEAH subfamily.

It is found in the virion. The catalysed reaction is ATP + H2O = ADP + phosphate + H(+). This Acanthamoeba polyphaga mimivirus (APMV) protein is Putative ATP-dependent RNA helicase R350.